The primary structure comprises 349 residues: Probable G-protein coupled receptor 21 (349 aa).

The Extracellular portion of the chain corresponds to 1–32; it reads MNSTWDGNQSSHPFCLLALGYLETVRFCLLEV. N-linked (GlcNAc...) asparagine glycans are attached at residues Asn2 and Asn8. Residues 33-53 form a helical membrane-spanning segment; it reads LIIVFLTVLIISGNIIVIFVF. The Cytoplasmic portion of the chain corresponds to 54–75; that stretch reads HCAPLLNHHSTSYFIQTMAYAD. Residues 76-96 form a helical membrane-spanning segment; sequence LLVGVSCLVPSLSLLYYPLPI. Residues 97–104 lie on the Extracellular side of the membrane; the sequence is EEAMTCQV. Residues 105–125 traverse the membrane as a helical segment; the sequence is FGFVVSVLKSISMASLACISI. The Cytoplasmic segment spans residues 126-147; that stretch reads DRYIAITKPLTYNTLVTPWRLR. The chain crosses the membrane as a helical span at residues 148-168; sequence LCIFLIWLYSTLVFLPSFFHW. Residues 169-191 are Extracellular-facing; that stretch reads GKPGYHGDVFQWCAESWHTNSYF. A helical transmembrane segment spans residues 192–212; the sequence is TLFIVMMLYAPAALIVCFTYF. Residues 213–252 lie on the Cytoplasmic side of the membrane; it reads NIFRICQQHTKEISERQARFSSQNGETGEPQTCPDKRYAM. The helical transmembrane segment at 253–273 threads the bilayer; that stretch reads VLFRITSVFYVLWLPYIIYFL. Topologically, residues 274–283 are extracellular; sequence LESSTGCSSR. Residues 284–304 form a helical membrane-spanning segment; sequence LASFLTTWLAISNSFCNCIIY. Residues 305-349 lie on the Cytoplasmic side of the membrane; sequence SLSNSVFQRGLKGLSGSLCTSCASHTTAKDPYTVRCKGPPNGSHI.

The protein belongs to the G-protein coupled receptor 1 family.

It localises to the cell membrane. Its function is as follows. Orphan receptor. The polypeptide is Probable G-protein coupled receptor 21 (Gpr21) (Mus musculus (Mouse)).